Here is a 510-residue protein sequence, read N- to C-terminus: NAD(P)H-quinone oxidoreductase subunit 2 B, chloroplastic (510 aa).

13 consecutive transmembrane segments (helical) span residues 24–44, 57–77, 99–119, 124–144, 149–169, 183–203, 227–247, 295–315, 323–343, 347–367, 395–415, 418–438, and 482–502; these read LLLF…GLIL, IPWL…ALLF, IFQF…VEYI, MAIT…MFLC, LITI…LSGY, YLLM…WLYG, PGIS…LSPA, WHLL…LIAI, MLAY…IVGD, GYAS…GTFA, ALSL…AGFF, LHLF…IGLL, and LSMI…NPII.

It belongs to the complex I subunit 2 family. In terms of assembly, NDH is composed of at least 16 different subunits, 5 of which are encoded in the nucleus.

The protein resides in the plastid. It is found in the chloroplast thylakoid membrane. The catalysed reaction is a plastoquinone + NADH + (n+1) H(+)(in) = a plastoquinol + NAD(+) + n H(+)(out). The enzyme catalyses a plastoquinone + NADPH + (n+1) H(+)(in) = a plastoquinol + NADP(+) + n H(+)(out). Functionally, NDH shuttles electrons from NAD(P)H:plastoquinone, via FMN and iron-sulfur (Fe-S) centers, to quinones in the photosynthetic chain and possibly in a chloroplast respiratory chain. The immediate electron acceptor for the enzyme in this species is believed to be plastoquinone. Couples the redox reaction to proton translocation, and thus conserves the redox energy in a proton gradient. The polypeptide is NAD(P)H-quinone oxidoreductase subunit 2 B, chloroplastic (Cucumis sativus (Cucumber)).